A 1363-amino-acid chain; its full sequence is Spike glycoprotein (1363 aa).

Positions 1–13 are cleaved as a signal peptide; that stretch reads MFLILLISLPMAL. Over 14 to 1307 the chain is Extracellular; it reads AVIGDLKCTT…GTYEYYVKWP (1294 aa). The BetaCoV S1-NTD domain occupies 15–298; the sequence is VIGDLKCTTV…DFMSEIKCKT (284 aa). 5 cysteine pairs are disulfide-bonded: Cys21-Cys165, Cys160-Cys193, Cys172-Cys252, Cys286-Cys296, and Cys331-Cys356. N-linked (GlcNAc...) asparagine; by host glycosylation is found at Asn59 and Asn133. The N-linked (GlcNAc...) asparagine; by host glycan is linked to Asn198. The BetaCoV S1-CTD domain occupies 329 to 617; it reads PDCNIEAWLN…DVNSGTTCST (289 aa). Asn359 carries an N-linked (GlcNAc...) asparagine; by host glycan. Intrachain disulfides connect Cys374/Cys427 and Cys386/Cys615. N-linked (GlcNAc...) asparagine; by host glycans are attached at residues Asn437, Asn649, Asn676, Asn696, Asn714, Asn739, and Asn788. Fusion peptide regions lie at residues 914–935 and 933–953; these read SAIEDLLFSKVKLSDVGFVEAY and EAYNNCTGGAEIRDLICVQSY. N-linked (GlcNAc...) asparagine; by host glycosylation occurs at Asn937. Residues Cys938 and Cys949 are joined by a disulfide bond. Residues 1014–1064 form a heptad repeat 1 region; the sequence is QKLIANAFNNALDAIQEGFDATNSALVKIQAVVNANAEALNNLLQQLSNRF. Residues 1043–1087 adopt a coiled-coil conformation; it reads QAVVNANAEALNNLLQQLSNRFGAISSSLQEILSRLDALEAQRQI. N-linked (GlcNAc...) asparagine; by host glycans are attached at residues Asn1194, Asn1224, Asn1234, Asn1253, Asn1267, and Asn1288. The interval 1258 to 1296 is heptad repeat 2; sequence APDLSLDYINVTFLDLQDEMNRLQEAIKLLNQSYINLKD. Residues 1269–1297 are a coiled coil; the sequence is TFLDLQDEMNRLQEAIKLLNQSYINLKDI. A helical membrane pass occupies residues 1308-1328; the sequence is WYVWLLIGFAGVAMLVLLFFI. The Cytoplasmic segment spans residues 1329–1363; that stretch reads CCCTGCGTSCFKKCGGCCDDYTGHQELVIKTSHDD. Positions 1359–1363 match the KxHxx motif; that stretch reads TSHDD.

It belongs to the betacoronaviruses spike protein family. In terms of assembly, homotrimer; each monomer consists of a S1 and a S2 subunit. The resulting peplomers protrude from the virus surface as spikes. Specific enzymatic cleavages in vivo yield mature proteins. The precursor is processed into S1 and S2 by host cell furin or another cellular protease to yield the mature S1 and S2 proteins. Additionally, a second cleavage leads to the release of a fusion peptide after viral attachment to host cell receptor. In terms of processing, the cytoplasmic Cys-rich domain is palmitoylated. Spike glycoprotein is digested within host endosomes.

The protein resides in the virion membrane. It localises to the host endoplasmic reticulum-Golgi intermediate compartment membrane. It is found in the host cell membrane. Its function is as follows. Attaches the virion to the cell membrane by interacting with host receptor, initiating the infection. In terms of biological role, mediates fusion of the virion and cellular membranes by acting as a class I viral fusion protein. Under the current model, the protein has at least three conformational states: pre-fusion native state, pre-hairpin intermediate state, and post-fusion hairpin state. During viral and target cell membrane fusion, the coiled coil regions (heptad repeats) assume a trimer-of-hairpins structure, positioning the fusion peptide in close proximity to the C-terminal region of the ectodomain. The formation of this structure appears to drive apposition and subsequent fusion of viral and target cell membranes. Functionally, acts as a viral fusion peptide which is unmasked following S2 cleavage occurring upon virus endocytosis. In Bos taurus (Bovine), this protein is Spike glycoprotein.